The following is a 129-amino-acid chain: Azurin-2 (129 aa).

The Plastocyanin-like domain maps to 1 to 129; that stretch reads AQCEATVESN…MMKGTLKLGS (129 aa). C3 and C26 are oxidised to a cystine. The Cu cation site is built by H46, C112, H117, and M121.

It localises to the periplasm. Its function is as follows. Transfers electrons from cytochrome c551 to cytochrome oxidase. This is Azurin-2 from Alcaligenes xylosoxydans xylosoxydans (Achromobacter xylosoxidans).